The sequence spans 953 residues: 26S proteasome non-ATPase regulatory subunit 1 (953 aa).

The residue at position 1 (methionine 1) is an N-acetylmethionine. Threonine 273 bears the Phosphothreonine mark. Residues serine 277–lysine 319 are disordered. Phosphoserine is present on serine 290. Positions serine 290–threonine 303 are enriched in basic and acidic residues. Lysine 310 bears the N6-acetyllysine mark. Threonine 311 bears the Phosphothreonine mark. The residue at position 315 (serine 315) is a Phosphoserine. PC repeat units follow at residues threonine 403–alanine 436, glycine 441–arginine 474, glycine 476–glutamate 510, alanine 511–leucine 545, glycine 547–arginine 580, serine 581–arginine 616, alanine 617–arginine 649, glycine 651–glutamine 685, glycine 686–alanine 726, and glycine 729–valine 761. At lysine 720 the chain carries N6-acetyllysine. Phosphothreonine is present on threonine 830. The residue at position 834 (serine 834) is a Phosphoserine. Disordered stretches follow at residues alanine 839–proline 881 and alanine 930–aspartate 953. Basic and acidic residues-rich tracts occupy residues lysine 842–glutamate 852 and alanine 859–glutamate 872. Residues glutamate 936 to aspartate 953 are compositionally biased toward acidic residues.

It belongs to the proteasome subunit S1 family. In terms of assembly, component of the 19S proteasome regulatory particle complex. The 26S proteasome consists of a 20S core particle (CP) and two 19S regulatory subunits (RP). The regulatory particle is made of a lid composed of 9 subunits, a base containing 6 ATPases and few additional components including PSMD1. Interacts with ADRM1. Interacts with ZFAND1.

Functionally, component of the 26S proteasome, a multiprotein complex involved in the ATP-dependent degradation of ubiquitinated proteins. This complex plays a key role in the maintenance of protein homeostasis by removing misfolded or damaged proteins, which could impair cellular functions, and by removing proteins whose functions are no longer required. Therefore, the proteasome participates in numerous cellular processes, including cell cycle progression, apoptosis, or DNA damage repair. The polypeptide is 26S proteasome non-ATPase regulatory subunit 1 (Psmd1) (Mus musculus (Mouse)).